The following is a 308-amino-acid chain: Methionine synthase (308 aa).

Histidine 192, cysteine 194, glutamate 215, and cysteine 282 together coordinate Zn(2+).

The protein belongs to the archaeal MetE family. Zn(2+) is required as a cofactor.

Its pathway is amino-acid biosynthesis; L-methionine biosynthesis via de novo pathway. Its function is as follows. Catalyzes the transfer of a methyl group to L-homocysteine resulting in methionine formation. Can use methylcobalamin and methylcobinamide as methyl donors, but methylcobalamin is not considered to be the physiological substrate. This Methanocaldococcus jannaschii (strain ATCC 43067 / DSM 2661 / JAL-1 / JCM 10045 / NBRC 100440) (Methanococcus jannaschii) protein is Methionine synthase.